The primary structure comprises 106 residues: Gas vesicle protein J (106 aa).

Belongs to the gas vesicle GvpA family.

It is found in the gas vesicle. Its function is as follows. A minor component of the gas vesicle, might be involved in nucleating gas vesicle formation. Gas vesicles are hollow, gas filled proteinaceous nanostructures found in some microorganisms. It is not clear what function gas vesicles perform in soil bacteria. The protein is Gas vesicle protein J of Streptomyces sp. (strain CB03234).